The following is a 213-amino-acid chain: NADH dehydrogenase [ubiquinone] iron-sulfur protein 7, mitochondrial (213 aa).

A mitochondrion-targeting transit peptide spans 1–38 (MAALSAPGLCGFRILGLRSSVGTAVQARGVHQSVATDG). Residues 32–53 (QSVATDGPSSTQPALPKARAVA) form a disordered region. A compositionally biased stretch (polar residues) spans 33–44 (SVATDGPSSTQP). Cys-88 and Cys-89 together coordinate [4Fe-4S] cluster. At Arg-111 the chain carries Hydroxyarginine. Positions 153 and 183 each coordinate [4Fe-4S] cluster.

This sequence belongs to the complex I 20 kDa subunit family. Core subunit of respiratory chain NADH dehydrogenase (Complex I) which is composed of 45 different subunits. This is a component of the iron-sulfur (IP) fragment of the enzyme. The cofactor is [4Fe-4S] cluster. Hydroxylated ar Arg-111 by NDUFAF5 early in the pathway of assembly of complex I, before the formation of the juncture between peripheral and membrane arms.

It is found in the mitochondrion inner membrane. It catalyses the reaction a ubiquinone + NADH + 5 H(+)(in) = a ubiquinol + NAD(+) + 4 H(+)(out). In terms of biological role, core subunit of the mitochondrial membrane respiratory chain NADH dehydrogenase (Complex I) which catalyzes electron transfer from NADH through the respiratory chain, using ubiquinone as an electron acceptor. Essential for the catalytic activity of complex I. The protein is NADH dehydrogenase [ubiquinone] iron-sulfur protein 7, mitochondrial (NDUFS7) of Gorilla gorilla gorilla (Western lowland gorilla).